The sequence spans 139 residues: Putative nickel-responsive regulator (139 aa).

Histidine 79, histidine 90, histidine 92, and cysteine 98 together coordinate Ni(2+).

The protein belongs to the transcriptional regulatory CopG/NikR family. Requires Ni(2+) as cofactor.

Its function is as follows. Transcriptional regulator. This Lawsonia intracellularis (strain PHE/MN1-00) protein is Putative nickel-responsive regulator.